We begin with the raw amino-acid sequence, 180 residues long: Stathmin-3 (180 aa).

Residues cysteine 22 and cysteine 24 are each lipidated (S-palmitoyl cysteine). Residues 38 to 180 form the SLD domain; the sequence is GDMEVKQLDK…NKEQREEMSG (143 aa). Phosphoserine is present on residues serine 50, serine 60, serine 65, serine 68, serine 72, serine 73, and serine 81. The segment covering 60–74 has biased composition (low complexity); sequence SPSDLSPESPVLSSP. Positions 60–81 are disordered; the sequence is SPSDLSPESPVLSSPPKRKDAS. Residues 75-179 adopt a coiled-coil conformation; it reads PKRKDASLEE…RNKEQREEMS (105 aa).

Belongs to the stathmin family. As to quaternary structure, interacts with STAT3. Interacts with CLU (secreted form); this interaction may act as an important modulator during neuronal differentiation. Post-translationally, N-terminal palmitoylation promotes specific anchoring to the cytosolic leaflet of Golgi membranes and subsequent vesicular trafficking along dendrites and axons. Neuronal Stathmins are substrates for palmitoyltransferases ZDHHC3, ZDHHC7 and ZDHHC15. In terms of tissue distribution, neuron specific.

The protein localises to the golgi apparatus. The protein resides in the cell projection. It localises to the growth cone. Its subcellular location is the axon. It is found in the cytoplasm. The protein localises to the cytosol. Functionally, exhibits microtubule-destabilizing activity, which is antagonized by STAT3. The chain is Stathmin-3 (Stmn3) from Mus musculus (Mouse).